Here is a 351-residue protein sequence, read N- to C-terminus: Large ribosomal subunit protein uL3 (351 aa).

2 disordered regions span residues 1–31 (MGHR…TPRT) and 246–271 (KGSR…GQLG).

This sequence belongs to the universal ribosomal protein uL3 family. As to quaternary structure, part of the 50S ribosomal subunit. Forms a cluster with proteins L14 and L24e.

Functionally, one of the primary rRNA binding proteins, it binds directly near the 3'-end of the 23S rRNA, where it nucleates assembly of the 50S subunit. This chain is Large ribosomal subunit protein uL3, found in Saccharolobus islandicus (strain M.16.27) (Sulfolobus islandicus).